Here is a 368-residue protein sequence, read N- to C-terminus: MHTMNGDNFANSFPKNPLLSRNSSSSNVIQYSDEFSPDEDWLNEHAAKEHEERIRRPSVNRAWQKNSTSGGPSVSLEKREADVASLGEVMDLEEVPRGITRQARQLNEYIFPKHRFRNHLVDEGKIPLVLVACGSFSPITYLHLRMFEMATDTIQEQTNMELVAGYFSPVNDHYKKEGLAPAYHRVRMCELACERTSSWLMVDAWESLQPSYTCTARVLDHFDEEINQKRGGITLSDGTKRPCKIMLLAGGDLIASMGEPGVWSDKDLHHILGKFGCCIVERTGSDVWAFLLAHDIMFAYRGNILVIKQLIYNDISSTKVRLFIRRGMSIRYLLPNSVIQYIERYALYRDAEPVKTIFYQSPFVRMEP.

Residues 1-14 (MHTMNGDNFANSFP) show a composition bias toward polar residues. Residues 1–25 (MHTMNGDNFANSFPKNPLLSRNSSS) are disordered. The residue at position 36 (serine 36) is a Phosphoserine. The tract at residues 47 to 78 (AKEHEERIRRPSVNRAWQKNSTSGGPSVSLEK) is disordered. The span at 61 to 72 (RAWQKNSTSGGP) shows a compositional bias: polar residues. Serine 75 and serine 85 each carry phosphoserine. NAD(+) is bound by residues serine 135 and phenylalanine 136. Residue histidine 143 coordinates ATP. Threonine 215, glycine 250, aspartate 252, tryptophan 263, arginine 282, and asparagine 313 together coordinate NAD(+). Residue 318-321 (TKVR) participates in ATP binding.

It belongs to the eukaryotic NMN adenylyltransferase family. A divalent metal cation is required as a cofactor.

The protein resides in the cytoplasm. It is found in the nucleus. The enzyme catalyses beta-nicotinamide D-ribonucleotide + ATP + H(+) = diphosphate + NAD(+). It carries out the reaction nicotinate beta-D-ribonucleotide + ATP + H(+) = deamido-NAD(+) + diphosphate. Its pathway is cofactor biosynthesis; NAD(+) biosynthesis; deamido-NAD(+) from nicotinate D-ribonucleotide: step 1/1. It functions in the pathway cofactor biosynthesis; NAD(+) biosynthesis; NAD(+) from nicotinamide D-ribonucleotide: step 1/1. Catalyzes the formation of NAD(+) from nicotinamide mononucleotide (NMN) and ATP. Can also use the deamidated form; nicotinic acid mononucleotide (NaMN) as substrate to form deamido-NAD(+) (NaAD). Key enzyme in both de novo and salvage pathways for NAD(+) biosynthesis. In Schizosaccharomyces pombe (strain 972 / ATCC 24843) (Fission yeast), this protein is Nicotinamide/nicotinic acid mononucleotide adenylyltransferase.